We begin with the raw amino-acid sequence, 87 residues long: Protein WFDC11 (87 aa).

The N-terminal stretch at 1-25 is a signal peptide; the sequence is MVSLMKLWIPMLMTFFCTVLLSVLG.

Its subcellular location is the secreted. This chain is Protein WFDC11 (WFDC11), found in Homo sapiens (Human).